Consider the following 156-residue polypeptide: Small ribosomal subunit protein uS7 (156 aa).

This sequence belongs to the universal ribosomal protein uS7 family. In terms of assembly, part of the 30S ribosomal subunit. Contacts proteins S9 and S11.

Its function is as follows. One of the primary rRNA binding proteins, it binds directly to 16S rRNA where it nucleates assembly of the head domain of the 30S subunit. Is located at the subunit interface close to the decoding center, probably blocks exit of the E-site tRNA. This is Small ribosomal subunit protein uS7 from Shewanella halifaxensis (strain HAW-EB4).